Here is a 237-residue protein sequence, read N- to C-terminus: Octopine transport system permease protein OccQ (237 aa).

Positions 22-222 constitute an ABC transmembrane type-1 domain; that stretch reads TAMTMAVAFS…LITFVSGQVF (201 aa). A run of 4 helical transmembrane segments spans residues 26–46, 72–92, 96–116, and 202–222; these read MAVA…GAAA, LVIY…ASLF, GFVG…VSGA, and SFYL…GQVF.

It belongs to the binding-protein-dependent transport system permease family. HisMQ subfamily.

The protein localises to the cell inner membrane. Component of the octopine active transport system probably consisting of four subunits: Q, M, P and T. The sequence is that of Octopine transport system permease protein OccQ (occQ) from Agrobacterium tumefaciens (strain Ach5).